The sequence spans 403 residues: Ribosomal RNA large subunit methyltransferase I (403 aa).

The PUA domain maps to 9–88 (YPRLVLSKGR…ESIDIAFFTR (80 aa)).

It belongs to the methyltransferase superfamily. RlmI family.

The protein localises to the cytoplasm. The catalysed reaction is cytidine(1962) in 23S rRNA + S-adenosyl-L-methionine = 5-methylcytidine(1962) in 23S rRNA + S-adenosyl-L-homocysteine + H(+). Specifically methylates the cytosine at position 1962 (m5C1962) of 23S rRNA. This chain is Ribosomal RNA large subunit methyltransferase I, found in Salmonella agona (strain SL483).